A 243-amino-acid polypeptide reads, in one-letter code: Carboxy-S-adenosyl-L-methionine synthase (243 aa).

S-adenosyl-L-methionine-binding positions include tyrosine 40, 65–67, 90–91, 118–119, asparagine 133, and arginine 200; these read GCS, DN, and DI.

Belongs to the class I-like SAM-binding methyltransferase superfamily. Cx-SAM synthase family. Homodimer.

The catalysed reaction is prephenate + S-adenosyl-L-methionine = carboxy-S-adenosyl-L-methionine + 3-phenylpyruvate + H2O. Functionally, catalyzes the conversion of S-adenosyl-L-methionine (SAM) to carboxy-S-adenosyl-L-methionine (Cx-SAM). The polypeptide is Carboxy-S-adenosyl-L-methionine synthase (Shewanella halifaxensis (strain HAW-EB4)).